A 226-amino-acid chain; its full sequence is Apoptosis regulator OPG045 (226 aa).

The essential and sufficient to inhibit host NLRP1 stretch occupies residues N32–Y37.

Belongs to the orthopoxvirus OPG045 family. As to quaternary structure, homodimer. Interacts with host pro-apoptotic protein BCL2L11 (via BH3 domain). Interacts with host NLRP1. Interacts with host BAK.

It localises to the host mitochondrion outer membrane. The protein resides in the host cytoplasm. In terms of biological role, plays a role in evading host innate immune response by inhibiting host inflammasome activation. Interacts with and inhibits NLR-mediated interleukin-1 beta/IL1B production in infected cells. At the host mitochondria outer membrane, interacts with the BH3 domain of host BAK and prevents BAK from binding active BAX. In turn, host apoptosis is inhibited. This is Apoptosis regulator OPG045 (OPG045) from Vaccinia virus (strain Western Reserve) (VACV).